Here is a 651-residue protein sequence, read N- to C-terminus: Acetyl-coenzyme A synthetase (651 aa).

CoA is bound by residues R190–K193 and T311. Residues G387–P389, D411–T416, D508, and R523 each bind ATP. Position 531 (S531) interacts with CoA. R534 provides a ligand contact to ATP. Mg(2+)-binding residues include V545, H547, and V550. Residue K617 is modified to N6-acetyllysine.

It belongs to the ATP-dependent AMP-binding enzyme family. The cofactor is Mg(2+). Acetylated. Deacetylation by the SIR2-homolog deacetylase activates the enzyme.

The catalysed reaction is acetate + ATP + CoA = acetyl-CoA + AMP + diphosphate. Catalyzes the conversion of acetate into acetyl-CoA (AcCoA), an essential intermediate at the junction of anabolic and catabolic pathways. AcsA undergoes a two-step reaction. In the first half reaction, AcsA combines acetate with ATP to form acetyl-adenylate (AcAMP) intermediate. In the second half reaction, it can then transfer the acetyl group from AcAMP to the sulfhydryl group of CoA, forming the product AcCoA. The polypeptide is Acetyl-coenzyme A synthetase (Mycobacterium bovis (strain ATCC BAA-935 / AF2122/97)).